A 483-amino-acid polypeptide reads, in one-letter code: Glutamyl-tRNA(Gln) amidotransferase subunit A (483 aa).

Active-site charge relay system residues include K76 and S151. Residue S175 is the Acyl-ester intermediate of the active site.

The protein belongs to the amidase family. GatA subfamily. Heterotrimer of A, B and C subunits.

The catalysed reaction is L-glutamyl-tRNA(Gln) + L-glutamine + ATP + H2O = L-glutaminyl-tRNA(Gln) + L-glutamate + ADP + phosphate + H(+). In terms of biological role, allows the formation of correctly charged Gln-tRNA(Gln) through the transamidation of misacylated Glu-tRNA(Gln) in organisms which lack glutaminyl-tRNA synthetase. The reaction takes place in the presence of glutamine and ATP through an activated gamma-phospho-Glu-tRNA(Gln). The sequence is that of Glutamyl-tRNA(Gln) amidotransferase subunit A from Pseudomonas syringae pv. tomato (strain ATCC BAA-871 / DC3000).